The following is a 74-amino-acid chain: Salivary glue protein Sgs-7 (74 aa).

The first 23 residues, 1–23 (MKLIAVTIIACILLIGFSDLALG), serve as a signal peptide directing secretion.

The polypeptide is Salivary glue protein Sgs-7 (Sgs7) (Drosophila melanogaster (Fruit fly)).